Here is a 244-residue protein sequence, read N- to C-terminus: Protein TIFY 10b (244 aa).

The Tify domain maps to 97–132; sequence QEPEKRQLTIFYGGKVLVFNDFPADKAKGLMQLASK. Residues 174 to 244 are disordered; sequence QKPARANASD…AVVKPIERGQ (71 aa). Positions 185–210 match the Jas motif; that stretch reads PIARKASLHRFLEKRKDRLNAKTPYQ. The short motif at 187–194 is the Nuclear localization signal element; it reads ARKASLHR. Basic and acidic residues predominate over residues 194–204; it reads RFLEKRKDRLN.

It belongs to the TIFY/JAZ family. Interacts with BHLH148. Interacts with COI1A and COI1B in a coronatine-dependent manner. Coronatine is an analog of jasmonoyl isoleucine (JA-Ile). Ubiquitinated. Targeted for degradation by the SCF(COI1) E3 ubiquitin ligase-proteasome pathway during jasmonate signaling.

Its subcellular location is the nucleus. Functionally, repressor of jasmonate responses. The polypeptide is Protein TIFY 10b (Oryza sativa subsp. japonica (Rice)).